Consider the following 1040-residue polypeptide: Tudor domain-containing protein 5 (1040 aa).

3 consecutive HTH OST-type domains span residues 7 to 80, 122 to 197, and 291 to 365; these read IQDC…KAIP, VPPI…LKKS, and VDPE…FDAD. The region spanning 533–592 is the Tudor domain; the sequence is FIQPGHLCCVKISEDKWWYRVIIHRILGKKEVEVFYPDFGNIGTVQKSSLRFLKCCYTKL. S809 carries the phosphoserine modification. Disordered regions lie at residues 857-891 and 912-975; these read DVKG…YPLD and AERS…AKDK. Composition is skewed to polar residues over residues 872–891 and 912–924; these read EKNT…YPLD and AERS…SIQT. S943 is modified (phosphoserine). Over residues 946–956 the composition is skewed to polar residues; that stretch reads NHSGSVESSPG. Positions 958–975 are enriched in basic and acidic residues; the sequence is LKKEDVSNSRAEATAKDK.

This sequence belongs to the TDRD5 family. Gonad-specific. Mainly expressed in testis. Present at low level in ovary (at protein level).

The protein localises to the cytoplasm. Required during spermiogenesis to participate in the repression transposable elements and prevent their mobilization, which is essential for the germline integrity. Probably acts via the piRNA metabolic process, which mediates the repression of transposable elements during meiosis by forming complexes composed of piRNAs and Piwi proteins and govern the methylation and subsequent repression of transposons. Required for chromatoid body (CB) assembly. In Mus musculus (Mouse), this protein is Tudor domain-containing protein 5 (Tdrd5).